Consider the following 193-residue polypeptide: Imidazoleglycerol-phosphate dehydratase (193 aa).

Belongs to the imidazoleglycerol-phosphate dehydratase family.

The protein localises to the cytoplasm. It carries out the reaction D-erythro-1-(imidazol-4-yl)glycerol 3-phosphate = 3-(imidazol-4-yl)-2-oxopropyl phosphate + H2O. Its pathway is amino-acid biosynthesis; L-histidine biosynthesis; L-histidine from 5-phospho-alpha-D-ribose 1-diphosphate: step 6/9. The sequence is that of Imidazoleglycerol-phosphate dehydratase from Saccharolobus islandicus (strain M.16.27) (Sulfolobus islandicus).